The sequence spans 1247 residues: Catenin delta-2 (1247 aa).

Disordered regions lie at residues 1 to 50 (MFAR…TTSA), 134 to 238 (SGIL…SAFH), and 256 to 309 (LPAP…KSYS). Ser7 is subject to Phosphoserine. The segment covering 22-50 (PSASEKNSSLSPGLNTSNGDGSETETTSA) has biased composition (polar residues). The stretch at 49-84 (SAILASVKEQELQFERLTRELEAERQIVASQLERCK) forms a coiled coil. Residues 149–160 (SLLSQSALQLNS) are compositionally biased toward low complexity. Positions 172 to 207 (YHSNQTLALGDTAPSQLPARSTQARAAGQSFSQGTT) are enriched in polar residues. An Omega-N-methylarginine modification is found at Arg209. Positions 218–228 (PAPPPPPPREP) are enriched in pro residues. Arg261 is subject to Omega-N-methylarginine. 2 positions are modified to phosphoserine: Ser264 and Ser273. The span at 265-276 (PLTTTQGGSPTK) shows a compositional bias: polar residues. Omega-N-methylarginine occurs at positions 279 and 293. Residues 296-309 (SPKQSPSRLAKSYS) are compositionally biased toward polar residues. Phosphoserine is present on residues Ser324, Ser357, Ser412, and Ser458. An ARM 1 repeat occupies 391–433 (GSRASYSSQHGHLAPELRALQSPEHHIDPIYEDRVYQKPPMRS). The interval 429–480 (PPMRSLSQSQGDPLPPAHTGTFRTSTAPSSPGVDSVPLQRTGSQHGPQNAAA) is disordered. A compositionally biased stretch (polar residues) spans 466–475 (LQRTGSQHGP). Ser511 is subject to Phosphoserine. Tyr513 is subject to Phosphotyrosine. Residues 514–533 (SKSGPALPPEGTLARSPSID) form a disordered region. 8 ARM repeats span residues 537 to 576 (KDPR…HLCF), 579 to 618 (NKIK…NLVY), 623 to 663 (DDNK…NLSS), 679 to 721 (LTNA…NVSS), 725 to 770 (EARR…NLSY), 832 to 872 (PKGI…NLAA), 904 to 943 (VYIR…NMAL), and 997 to 1040 (MENA…SMWQ). Disordered stretches follow at residues 1064-1131 (TIER…HTSR) and 1152-1176 (APAE…RKDY). The segment covering 1072–1081 (PYSSSRTPSI) has biased composition (polar residues). Phosphoserine is present on residues Ser1087 and Ser1098. The segment covering 1087–1100 (SPNNRSASAPASPR) has biased composition (low complexity). Basic and acidic residues predominate over residues 1103–1112 (ISLKERKTDY).

It belongs to the beta-catenin family. Binds to E-cadherin at a juxtamembrane site within the cytoplasmic domain. Binds to PSEN1. Interacts with PDZD2. Interacts (via the extreme C-terminus) with FRMPD2 (via the PDZ 2 domain). Interacts with ZBTB33. Interacts with ARHGEF28. Interacts with CDK5. Interacts with CTNNB1. Interacts with GSK3A and GSK3B. Interacts with DNM2. Interacts with CCDC85B. Post-translationally, O-glycosylated. Phosphorylated by CDK5. Phosphorylated by GSK3B. In terms of tissue distribution, expressed in neurons and glial cells. Isoform 2 was found to be the most predominant isoform in various brain regions. Expressed at neuromuscular junctions.

Its subcellular location is the nucleus. The protein resides in the cell junction. It is found in the adherens junction. It localises to the cell projection. The protein localises to the dendrite. Its subcellular location is the perikaryon. Has a critical role in neuronal development, particularly in the formation and/or maintenance of dendritic spines and synapses. Involved in the regulation of canonical Wnt signaling. It probably acts on beta-catenin turnover, facilitating beta-catenin interaction with GSK3B, phosphorylation, ubiquitination and degradation. May be involved in neuronal cell adhesion and tissue morphogenesis and integrity by regulating adhesion molecules. Functions as a transcriptional activator when bound to ZBTB33. The sequence is that of Catenin delta-2 (Ctnnd2) from Mus musculus (Mouse).